The sequence spans 195 residues: MNINFNNINLIISAVKKAQYPDTGLTEVALSGRSNVGKSTFINSMIGRKNMARTSQQPGKTQTLNFYNIDEQLIFVDVPGYGYAKVSKVQREKFGKMIEEYITQRENLKLVIQLVDLRHQPTEDDVLMYNYLKHFDIPTLVICTKEDKIAKGKVQKHIKRIKDKLELESGDNIISYSSIKNSKQQEIWNFIETYI.

Residues 24–195 (GLTEVALSGR…EIWNFIETYI (172 aa)) enclose the EngB-type G domain. Residues 32-39 (GRSNVGKS), 59-63 (GKTQT), 77-80 (DVPG), 144-147 (TKED), and 176-178 (YSS) each bind GTP. Positions 39 and 61 each coordinate Mg(2+).

The protein belongs to the TRAFAC class TrmE-Era-EngA-EngB-Septin-like GTPase superfamily. EngB GTPase family. Mg(2+) serves as cofactor.

In terms of biological role, necessary for normal cell division and for the maintenance of normal septation. The protein is Probable GTP-binding protein EngB of Staphylococcus epidermidis (strain ATCC 35984 / DSM 28319 / BCRC 17069 / CCUG 31568 / BM 3577 / RP62A).